We begin with the raw amino-acid sequence, 74 residues long: Lantibiotic lichenicidin A1 (74 aa).

A propeptide spanning residues Met-1 to Gly-42 is cleaved from the precursor. At Thr-43 the chain carries 2-oxobutanoic acid. The segment at residues Thr-45 to Cys-49 is a cross-link (beta-methyllanthionine (Thr-Cys)). The residue at position 47 (Ser-47) is a 2,3-didehydroalanine (Ser). Position 48 is a (Z)-2,3-didehydrobutyrine (Thr-48). Positions Ser-53 to Cys-63 form a cross-link, lanthionine (Ser-Cys). Cross-links (beta-methyllanthionine (Thr-Cys)) lie at residues Thr-64–Cys-69 and Thr-66–Cys-73.

Maturation of lantibiotics involves the enzymatic conversion of Thr, and Ser into dehydrated AA and the formation of thioether bonds with cysteine. This is followed by membrane translocation and cleavage of the modified precursor.

The protein resides in the secreted. Its subcellular location is the cell wall. Functionally, lanthionine-containing peptide antibiotic (lantibiotic) active on Gram-positive bacteria. The bactericidal activity of lantibiotics is based on depolarization of energized bacterial cytoplasmic membranes, initiated by the formation of aqueous transmembrane pores. When present individually, LchA1 exhibits activity towards L.lactis HP. When combined with LchA2, it displays activity towards a broad spectrum of non-pathogenic and pathogenic Gram-positive bacteria including strains of L.monocytogenes, methicillin-resistant S.aureus, S.pneumoniae and strains of vancomycin-resistant enterococci, but not towards E.faecium L4001 and BM4147-1. Combined LchA1 and LchA2 peptides also inhibit Bacillus sp. HIL-Y85/54728, L.lactis DPC3417 and B.halodurans C-125, which produce lantibiotics themselves. Inactivated by proteinase K and pronase E, but not by trypsin and chymotrypsin. The sequence is that of Lantibiotic lichenicidin A1 from Bacillus licheniformis (strain ATCC 14580 / DSM 13 / JCM 2505 / CCUG 7422 / NBRC 12200 / NCIMB 9375 / NCTC 10341 / NRRL NRS-1264 / Gibson 46).